The following is a 290-amino-acid chain: Porphobilinogen deaminase (290 aa).

C237 is subject to S-(dipyrrolylmethanemethyl)cysteine.

The protein belongs to the HMBS family. Monomer. It depends on dipyrromethane as a cofactor.

It carries out the reaction 4 porphobilinogen + H2O = hydroxymethylbilane + 4 NH4(+). Its pathway is porphyrin-containing compound metabolism; protoporphyrin-IX biosynthesis; coproporphyrinogen-III from 5-aminolevulinate: step 2/4. Tetrapolymerization of the monopyrrole PBG into the hydroxymethylbilane pre-uroporphyrinogen in several discrete steps. This is Porphobilinogen deaminase from Clostridium kluyveri (strain NBRC 12016).